The following is a 503-amino-acid chain: MLDLTYEAPKPKVIAGAKHDWELVIGMEIHAQVSSNAKLFSGASTTFGAEPNSNVSFVDCAMPGMLPVINEFCVAQAVRTGLGLKAQINLVSAFDRKNYFYPDLPQGYQISQLYHPIVGEGEVLVELAPGIARLVRIERIHLEQDAGKSIHDMDPNLSFVDFNRTGVALMEIVSRPDIRGPEEAAAYVAKLRQILRYLGTCDGNMQNGNLRADVNVSVCRPGQYEKYQETQDFSHLGTRCEIKNMNSMRFIQQAIDYEARRQIAILEDGGKVVQETRLYDPDKGETRSMRSKEEAHDYRYFPDPDLLPLEIEQGWVDEIAASMPELPDAKKARFMADYGVTDYDANVLTAELDAAAYFEEVARGRDGKQAANWVINELFGRLNKQGLTIADPPVKAGQLGGVLDLIASGEISGKMAKDLFEILWTEGGDPAEVAAARGMKQVTDTGAIETAVDEIIAANPAQVEKAKANPKLAGWFVGQVIKATGGKANPAAVNQIVAQKLGL.

Belongs to the GatB/GatE family. GatB subfamily. In terms of assembly, heterotrimer of A, B and C subunits.

It carries out the reaction L-glutamyl-tRNA(Gln) + L-glutamine + ATP + H2O = L-glutaminyl-tRNA(Gln) + L-glutamate + ADP + phosphate + H(+). It catalyses the reaction L-aspartyl-tRNA(Asn) + L-glutamine + ATP + H2O = L-asparaginyl-tRNA(Asn) + L-glutamate + ADP + phosphate + 2 H(+). Functionally, allows the formation of correctly charged Asn-tRNA(Asn) or Gln-tRNA(Gln) through the transamidation of misacylated Asp-tRNA(Asn) or Glu-tRNA(Gln) in organisms which lack either or both of asparaginyl-tRNA or glutaminyl-tRNA synthetases. The reaction takes place in the presence of glutamine and ATP through an activated phospho-Asp-tRNA(Asn) or phospho-Glu-tRNA(Gln). This chain is Aspartyl/glutamyl-tRNA(Asn/Gln) amidotransferase subunit B, found in Cereibacter sphaeroides (strain ATCC 17029 / ATH 2.4.9) (Rhodobacter sphaeroides).